A 149-amino-acid chain; its full sequence is Calmodulin (149 aa).

Position 2 is an N-acetylalanine (Ala2). EF-hand domains lie at 8–43 (EQIAEFKEAFSLFDKDGDGTITTKELGTVMRSLGQN), 44–79 (PTEAELQDMINEVDADGNGTIDFPEFLSLMARKMKD), 81–116 (DTEEELVEAFKVFDRDGNGLISAAELRHVMTNLGEK), and 117–149 (LTDEEVDEMIREADVDGDGHINYEEFVRMMMAK). Residues Asp21, Asp23, Asp25, Thr27, Glu32, Asp57, Asp59, Asn61, Thr63, Glu68, Asp94, Asp96, Asn98, and Glu105 each contribute to the Ca(2+) site. The residue at position 116 (Lys116) is an N6,N6,N6-trimethyllysine. Ca(2+)-binding residues include Asp130, Asp132, Asp134, His136, and Glu141.

It belongs to the calmodulin family.

Calmodulin mediates the control of a large number of enzymes, ion channels and other proteins by Ca(2+). Among the enzymes to be stimulated by the calmodulin-Ca(2+) complex are a number of protein kinases and phosphatases. This Stylonychia lemnae (Ciliate) protein is Calmodulin.